A 294-amino-acid polypeptide reads, in one-letter code: Ribosomal protein L11 methyltransferase (294 aa).

Residues T146, G167, D189, and N231 each contribute to the S-adenosyl-L-methionine site.

The protein belongs to the methyltransferase superfamily. PrmA family.

The protein resides in the cytoplasm. It carries out the reaction L-lysyl-[protein] + 3 S-adenosyl-L-methionine = N(6),N(6),N(6)-trimethyl-L-lysyl-[protein] + 3 S-adenosyl-L-homocysteine + 3 H(+). Methylates ribosomal protein L11. The polypeptide is Ribosomal protein L11 methyltransferase (Photobacterium profundum (strain SS9)).